The sequence spans 421 residues: Alpha-1-antiproteinase 2 (421 aa).

A signal peptide spans 1–24 (MPSSVPWCLLLLAGLCCLVPSSLA). Residues Asn-73, Asn-110, and Asn-274 are each glycosylated (N-linked (GlcNAc...) asparagine). Residues 376 to 395 (GTTMWEIMPISLPPDLKFNR) are RCL.

The protein belongs to the serpin family. Post-translationally, N-glycosylated with carbohydrates having biantennary side chains. As to expression, plasma.

The protein localises to the secreted. In terms of biological role, inhibitor of serine proteases. This chain is Alpha-1-antiproteinase 2, found in Equus caballus (Horse).